The sequence spans 936 residues: Probable outer membrane protein pmp7 (936 aa).

Positions 1-23 are cleaved as a signal peptide; sequence MKSSVSWLFFSSIPLFSSLSIVA. Positions 636-936 constitute an Autotransporter domain; sequence GEPFERELWL…NTNLGSKFCF (301 aa).

Belongs to the PMP outer membrane protein family.

Its subcellular location is the secreted. The protein localises to the cell wall. It localises to the cell outer membrane. This chain is Probable outer membrane protein pmp7 (pmp7), found in Chlamydia pneumoniae (Chlamydophila pneumoniae).